Consider the following 191-residue polypeptide: MLAIGITGSYASGKTFMLDYLTEKGYKTFCADRCIKELYQDVVLQTQILKLLPELESFNIRKISNLIYNNDLAREKLQNFIYPLLIDKLILFKKENANSKFGFAEIPLLYEAKFEKYFDFVVTIYCSEAIRMQRAITRSSFDIEIYNKIKEIQLSQESKIAKADFAINSGVDMLDLEKQIAKLIKDLECRV.

Positions 3 to 191 (AIGITGSYAS…KLIKDLECRV (189 aa)) constitute a DPCK domain. Residue 11–16 (ASGKTF) coordinates ATP.

This sequence belongs to the CoaE family.

The protein localises to the cytoplasm. The catalysed reaction is 3'-dephospho-CoA + ATP = ADP + CoA + H(+). It functions in the pathway cofactor biosynthesis; coenzyme A biosynthesis; CoA from (R)-pantothenate: step 5/5. Catalyzes the phosphorylation of the 3'-hydroxyl group of dephosphocoenzyme A to form coenzyme A. The sequence is that of Dephospho-CoA kinase from Rickettsia conorii (strain ATCC VR-613 / Malish 7).